The following is a 60-amino-acid chain: Potassium channel toxin alpha-KTx 29.3 (60 aa).

The first 28 residues, methionine 1 to alanine 28, serve as a signal peptide directing secretion. 3 disulfides stabilise this stretch: cysteine 32–cysteine 51, cysteine 40–cysteine 56, and cysteine 44–cysteine 58.

This sequence belongs to the short scorpion toxin superfamily. Potassium channel inhibitor family. Alpha-KTx 29 subfamily. As to expression, expressed by the venom gland.

It is found in the secreted. Weakly inhibits the Kv1.3/KCNA3 channel (1 uM of thetoxin inhibits currents by 13.2%) and Kv7.1/KCNQ1 channel (10 uM of the toxin inhibits currents by 27.7%). This chain is Potassium channel toxin alpha-KTx 29.3, found in Lychas mucronatus (Chinese swimming scorpion).